We begin with the raw amino-acid sequence, 1199 residues long: MALKMVKGSIDRMFDKNLQDLVRGIRNHKEDEAKYISQCIDEIKQELKQDNIAVKANAVCKLTYLQMLGYDISWAAFNIIEVMSASKFTFKRVGYLAASQCFHEGTDVIMLTTNQIRKDLSSPSQYDTGVALTGLSCFVTPDLARDLANDIMTLMSHTKPYIRKKAVLIMYKVFLKYPESLRPAFPRLKEKLEDPDPGVQSAAVNVICELARRNPKNYLSLAPLFFKLMTSSTNNWVLIKIIKLFGALTPLEPRLGKKLIEPLTNLIHSTSAMSLLYECVNTVIAVLISLSSGMPNHSASIQLCVQKLRILIEDSDQNLKYLGLLAMSKILKTHPKSVQSHKDLILQCLDDKDESIRLRALDLLYGMVSKKNLMEIVKKLMTHVDKAEGTTYRDELLTKIIDICSQSNYQHITNFEWYISILVELTRLEGTRHGHLIAAQMLDVAIRVKAIRKFAVSQMSSLLDSAHLVASSTQRNGICEVLYAAAWICGEFSEHLQGPQQTLEAMLRPKVTTLPGHIQAVYVQNVVKLYASILQQKEQAADTEAAQEVTQLLVERLPQFVQSADLEVQERASCILQLVKHVQKLQAKGVPVAEEVSALFAGELNPVAPKAQKKVPVPEGLDLDAWINEPPSDSESEDEKPKAIFHEEEPRHTRRRQPEEDEEELARRREARKQEQANNPFYIKSSPSPQKRYQDAPGVEHIPVVQIDLSVPLKVPGMPMSDQYVKLEEQRRHRQRLEKDKKRKKKEKGKRRHSSLPTESDEDIAPAQRVDIITEEMPENALPSDEDDKDPNDPYRALDIDLDKPLADSEKLPVQKHRNAEAVKSPEKEGVLGVEKKSKKPKKKEKKTKEREREKKDKKGEDLDFWLSTTPPPAAAPIPAPSTEELAASTITSPKDECEVLKGEEEDHVDHDQERKSSRHKKKKHRKEKEKEERPRDKKKAKKKQVAPLENGAAAEEEEEPIPPMSSYCLLAESPYIKVTYDIQASLQKDSQVTVSIILENQSSSFLKNMELNVLDSLNTKMTRPEGSSVHDGVPVPFQLPPGVSNEAQFVFTIQSIVMAQKLKGTLSFIAKDDEGATHEKLDFRLHFSCSSYLITTPCYSDAFAKLLESGDLSMNSIKVDGISMSFQNLLAKICFYHHFSVVERVDSCASMYSRSIQGHHVCLLVKKGESSVSVDGKCSDATLLSSLLEEMKTTLAQC.

Residue alanine 2 is modified to N-acetylalanine. HEAT repeat units follow at residues 34 to 71, 142 to 179, 180 to 216, 218 to 254, 257 to 296, 298 to 336, 337 to 373, 375 to 409, and 521 to 558; these read KYIS…LGYD, DLAR…KYPE, SLRP…RNPK, YLSL…LEPR, KKLI…GMPN, SASI…THPK, SVQS…KKNL, EIVK…QSNY, and VYVQ…ERLP. 2 disordered regions span residues 623-695 and 724-963; these read LDAW…RYQD and YVKL…EPIP. A phosphoserine mark is found at serine 632, serine 634, and serine 636. Basic and acidic residues-rich tracts occupy residues 639–651 and 665–675; these read EKPK…EEPR and LARRREARKQE. A coiled-coil region spans residues 659–679; the sequence is EEDEEELARRREARKQEQANN. Position 688 is a phosphoserine (serine 688). A coiled-coil region spans residues 722–750; sequence DQYVKLEEQRRHRQRLEKDKKRKKKEKGK. Positions 732-754 are enriched in basic residues; it reads RHRQRLEKDKKRKKKEKGKRRHS. Phosphoserine is present on residues serine 754 and serine 755. Threonine 758 bears the Phosphothreonine mark. 3 positions are modified to phosphoserine: serine 760, serine 784, and serine 825. Over residues 773–790 the composition is skewed to acidic residues; that stretch reads ITEEMPENALPSDEDDKD. The segment covering 791 to 836 has biased composition (basic and acidic residues); sequence PNDPYRALDIDLDKPLADSEKLPVQKHRNAEAVKSPEKEGVLGVEK. Residues 837-846 show a composition bias toward basic residues; sequence KSKKPKKKEK. The stretch at 843–863 forms a coiled coil; that stretch reads KKEKKTKEREREKKDKKGEDL. Basic and acidic residues predominate over residues 847 to 862; that stretch reads KTKEREREKKDKKGED. A compositionally biased stretch (pro residues) spans 870–880; that stretch reads TPPPAAAPIPA. A compositionally biased stretch (basic and acidic residues) spans 894 to 916; sequence PKDECEVLKGEEEDHVDHDQERK. Residues 911–934 adopt a coiled-coil conformation; sequence HDQERKSSRHKKKKHRKEKEKEER. Over residues 917-928 the composition is skewed to basic residues; sequence SSRHKKKKHRKE.

This sequence belongs to the adaptor complexes large subunit family. In terms of assembly, adaptor protein complex 3 (AP-3) is a heterotetramer composed of two large adaptins (delta-type subunit AP3D1 and beta-type subunit AP3B1 or AP3B2), a medium adaptin (mu-type subunit AP3M1 or AP3M2) and a small adaptin (sigma-type subunit APS1 or AP3S2). AP-3 associates with the BLOC-1 complex. Interacts with SLC30A2. Interacts with CLN3 (via dileucine motif); this interaction facilitates lysosomal targeting.

It localises to the cytoplasm. The protein resides in the golgi apparatus membrane. In terms of biological role, part of the AP-3 complex, an adaptor-related complex which is not clathrin-associated. The complex is associated with the Golgi region as well as more peripheral structures. It facilitates the budding of vesicles from the Golgi membrane and may be directly involved in trafficking to lysosomes. Involved in process of CD8+ T-cell and NK cell degranulation. In concert with the BLOC-1 complex, AP-3 is required to target cargos into vesicles assembled at cell bodies for delivery into neurites and nerve terminals. This Mus musculus (Mouse) protein is AP-3 complex subunit delta-1 (Ap3d1).